Here is a 382-residue protein sequence, read N- to C-terminus: Lipid-A-disaccharide synthase (382 aa).

This sequence belongs to the LpxB family.

The enzyme catalyses a lipid X + a UDP-2-N,3-O-bis[(3R)-3-hydroxyacyl]-alpha-D-glucosamine = a lipid A disaccharide + UDP + H(+). It functions in the pathway bacterial outer membrane biogenesis; LPS lipid A biosynthesis. In terms of biological role, condensation of UDP-2,3-diacylglucosamine and 2,3-diacylglucosamine-1-phosphate to form lipid A disaccharide, a precursor of lipid A, a phosphorylated glycolipid that anchors the lipopolysaccharide to the outer membrane of the cell. The chain is Lipid-A-disaccharide synthase from Alkalilimnicola ehrlichii (strain ATCC BAA-1101 / DSM 17681 / MLHE-1).